Consider the following 370-residue polypeptide: Protein-glutamate methylesterase/protein-glutamine glutaminase of group 1 operon (370 aa).

The Response regulatory domain occupies 4-121; it reads KVLVVDDSGF…SRNPDKVKQL (118 aa). Aspartate 55 is modified (4-aspartylphosphate). A compositionally biased stretch (low complexity) spans 150–180; that stretch reads PASTFTSQAQTRPAAPARAAAPTPAASQSPA. The tract at residues 150-183 is disordered; the sequence is PASTFTSQAQTRPAAPARAAAPTPAASQSPAPKR. The CheB-type methylesterase domain maps to 179–370; sequence PAPKRKPYKL…IGKHLVEACV (192 aa). Residues serine 194, histidine 221, and aspartate 314 contribute to the active site.

It belongs to the CheB family. Post-translationally, phosphorylated by CheA. Phosphorylation of the N-terminal regulatory domain activates the methylesterase activity.

It is found in the cytoplasm. It catalyses the reaction [protein]-L-glutamate 5-O-methyl ester + H2O = L-glutamyl-[protein] + methanol + H(+). The enzyme catalyses L-glutaminyl-[protein] + H2O = L-glutamyl-[protein] + NH4(+). In terms of biological role, involved in chemotaxis. Part of a chemotaxis signal transduction system that modulates chemotaxis in response to various stimuli. Catalyzes the demethylation of specific methylglutamate residues introduced into the chemoreceptors (methyl-accepting chemotaxis proteins or MCP) by CheR. Also mediates the irreversible deamidation of specific glutamine residues to glutamic acid. This is Protein-glutamate methylesterase/protein-glutamine glutaminase of group 1 operon from Pseudomonas putida (strain ATCC 47054 / DSM 6125 / CFBP 8728 / NCIMB 11950 / KT2440).